Consider the following 896-residue polypeptide: Protein translocase subunit SecA (896 aa).

Residues Q87, 105–109, and D507 contribute to the ATP site; that span reads GEGKT. Positions 855–879 are disordered; that stretch reads LSENDEASETQTFRRQEKKIGRNDP. The segment covering 866–876 has biased composition (basic and acidic residues); the sequence is TFRRQEKKIGR. Residues C880, C882, C891, and H892 each coordinate Zn(2+).

Belongs to the SecA family. Monomer and homodimer. Part of the essential Sec protein translocation apparatus which comprises SecA, SecYEG and auxiliary proteins SecDF-YajC and YidC. Zn(2+) is required as a cofactor.

The protein localises to the cell inner membrane. The protein resides in the cytoplasm. It catalyses the reaction ATP + H2O + cellular proteinSide 1 = ADP + phosphate + cellular proteinSide 2.. Part of the Sec protein translocase complex. Interacts with the SecYEG preprotein conducting channel. Has a central role in coupling the hydrolysis of ATP to the transfer of proteins into and across the cell membrane, serving both as a receptor for the preprotein-SecB complex and as an ATP-driven molecular motor driving the stepwise translocation of polypeptide chains across the membrane. This Legionella pneumophila (strain Lens) protein is Protein translocase subunit SecA.